We begin with the raw amino-acid sequence, 422 residues long: UDP-N-acetylglucosamine 1-carboxyvinyltransferase (422 aa).

22–23 is a phosphoenolpyruvate binding site; the sequence is KN. R94 is a binding site for UDP-N-acetyl-alpha-D-glucosamine. Catalysis depends on C118, which acts as the Proton donor. C118 bears the 2-(S-cysteinyl)pyruvic acid O-phosphothioketal mark. UDP-N-acetyl-alpha-D-glucosamine contacts are provided by residues 123–127, D309, and I331; that span reads RPVDL.

The protein belongs to the EPSP synthase family. MurA subfamily.

Its subcellular location is the cytoplasm. The catalysed reaction is phosphoenolpyruvate + UDP-N-acetyl-alpha-D-glucosamine = UDP-N-acetyl-3-O-(1-carboxyvinyl)-alpha-D-glucosamine + phosphate. It functions in the pathway cell wall biogenesis; peptidoglycan biosynthesis. Cell wall formation. Adds enolpyruvyl to UDP-N-acetylglucosamine. The protein is UDP-N-acetylglucosamine 1-carboxyvinyltransferase of Cereibacter sphaeroides (strain KD131 / KCTC 12085) (Rhodobacter sphaeroides).